The chain runs to 153 residues: UPF0756 membrane protein LSL_0936 (153 aa).

5 consecutive transmembrane segments (helical) span residues 4–24, 26–46, 51–71, 86–106, and 116–136; these read WIFLGLILLIAYLGKNSSLLI, GAVVIVIKLFPFLSQKLYPVI, INWGVTIISVAILIPIATGQI, WIAVVCGILVAILSKHGVNLL, and LVIGTIIGVVFLKGVAAGPVI.

It belongs to the UPF0756 family.

The protein resides in the cell membrane. The polypeptide is UPF0756 membrane protein LSL_0936 (Ligilactobacillus salivarius (strain UCC118) (Lactobacillus salivarius)).